The sequence spans 532 residues: Protein PTST homolog 2, chloroplastic (532 aa).

A chloroplast-targeting transit peptide spans 1–71; the sequence is MVSINSGPIS…KPRKKSCCSR (71 aa). 4 disordered regions span residues 165-201, 256-292, 314-347, and 367-388; these read QLPN…SRND, EVDG…SETW, SSGL…EDVN, and HSLR…TAGN. Positions 173 to 183 are enriched in basic and acidic residues; that stretch reads EMDKTLNHGDL. The span at 320 to 339 shows a compositional bias: basic and acidic residues; it reads VKKDDTKKDSGDSMNGKDRI. Positions 389-454 form a coiled coil; sequence LENLSDDWEY…ASRALRLLRT (66 aa).

In terms of assembly, interacts with PTST3 and SS4. Interacts with MFP1; the interaction is essential for the initiation of starch granules biosynthesis in leaf chloroplasts, for the correct location of the process in the stromal spaces between the thylakoid membranes, and for the association of this protein with the thylakoid membranes. Interacts with PII1/MRC; the interaction is essential for the initiation of starch granules biosynthesis in leaf chloroplasts.

It localises to the plastid. The protein resides in the chloroplast. Its subcellular location is the chloroplast thylakoid membrane. Its function is as follows. Involved in starch granule initiation in leaf chloroplasts. Binds and delivers suitable maltooligosaccharide substrates to starch synthase 4 (SS4). The chain is Protein PTST homolog 2, chloroplastic from Arabidopsis thaliana (Mouse-ear cress).